We begin with the raw amino-acid sequence, 258 residues long: tRNA pseudouridine synthase A (258 aa).

The active-site Nucleophile is the D52. Y110 serves as a coordination point for substrate.

It belongs to the tRNA pseudouridine synthase TruA family. As to quaternary structure, homodimer.

It catalyses the reaction uridine(38/39/40) in tRNA = pseudouridine(38/39/40) in tRNA. Its function is as follows. Formation of pseudouridine at positions 38, 39 and 40 in the anticodon stem and loop of transfer RNAs. The polypeptide is tRNA pseudouridine synthase A (Francisella tularensis subsp. holarctica (strain FTNF002-00 / FTA)).